Here is a 337-residue protein sequence, read N- to C-terminus: MKIAVDAMGGDHAPKEIVLGVMKAVAQYKDIEILLFGDETKINEYLTDKTRVKIIHTDEKIESDDEPVRAVKRKKKASMVLAAQAVKDGEADACISAGNTGALMSTGLFVIGRIKGIDRPALAPTLPTVTGKGFVMLDLGANAEAKPEHLLQFGLMGSVYAEKVRKIDRPRVALLNIGTEETKGNDLTKKSFELMKNQDAYEFIGNIEARDLLMDVADVVVTDGFTGNMVLKSIEGTGAAFLSMLKMSLLNGFKNKVAASFLKKDLMELKAKMDYSEYGGACLFGVQAPVVKAHGSSNANGIFTTIRQVREMVEKQVVETIKAEVDKVKVGGTEAND.

The protein belongs to the PlsX family. As to quaternary structure, homodimer. Probably interacts with PlsY.

Its subcellular location is the cytoplasm. The enzyme catalyses a fatty acyl-[ACP] + phosphate = an acyl phosphate + holo-[ACP]. The protein operates within lipid metabolism; phospholipid metabolism. In terms of biological role, catalyzes the reversible formation of acyl-phosphate (acyl-PO(4)) from acyl-[acyl-carrier-protein] (acyl-ACP). This enzyme utilizes acyl-ACP as fatty acyl donor, but not acyl-CoA. This chain is Phosphate acyltransferase, found in Listeria welshimeri serovar 6b (strain ATCC 35897 / DSM 20650 / CCUG 15529 / CIP 8149 / NCTC 11857 / SLCC 5334 / V8).